The sequence spans 175 residues: Cytochrome c homolog (175 aa).

At 1–8 the chain is on the cytoplasmic side; it reads MSGKELNK. A helical; Signal-anchor membrane pass occupies residues 9–29; sequence IVAAILFASLIAMMVGFVANI. At 30–175 the chain is on the periplasmic side; the sequence is LYKPTLELQH…LFLKTYVHDK (146 aa). Residues cysteine 84, cysteine 87, histidine 88, and methionine 150 each contribute to the heme c site.

Belongs to the cytochrome c family. Post-translationally, binds 1 heme c group covalently per subunit.

The protein resides in the cell membrane. Functionally, may be involved in electron transfer from bc1 complex to aa3. The protein is Cytochrome c homolog (cycM) of Rickettsia conorii (strain ATCC VR-613 / Malish 7).